Consider the following 288-residue polypeptide: HTH-type transcriptional regulator CzcR (288 aa).

One can recognise an HTH lysR-type domain in the interval 1–58 (MELRDLQIFKCVAHHKSITGAAKELNYVQSNVTARIKQLENELKTPLFNRHKKGVSLS). Positions 18–37 (ITGAAKELNYVQSNVTARIK) form a DNA-binding region, H-T-H motif.

This sequence belongs to the LysR transcriptional regulatory family.

The polypeptide is HTH-type transcriptional regulator CzcR (czcR) (Bacillus subtilis (strain 168)).